The chain runs to 174 residues: Protein GrpE (174 aa).

The segment at 1–35 (MAQDIKNEEVEEVQEEEVVKTAEETTPEKSELDLA) is disordered. Over residues 17–35 (EVVKTAEETTPEKSELDLA) the composition is skewed to basic and acidic residues.

This sequence belongs to the GrpE family. In terms of assembly, homodimer.

Its subcellular location is the cytoplasm. Participates actively in the response to hyperosmotic and heat shock by preventing the aggregation of stress-denatured proteins, in association with DnaK and GrpE. It is the nucleotide exchange factor for DnaK and may function as a thermosensor. Unfolded proteins bind initially to DnaJ; upon interaction with the DnaJ-bound protein, DnaK hydrolyzes its bound ATP, resulting in the formation of a stable complex. GrpE releases ADP from DnaK; ATP binding to DnaK triggers the release of the substrate protein, thus completing the reaction cycle. Several rounds of ATP-dependent interactions between DnaJ, DnaK and GrpE are required for fully efficient folding. This chain is Protein GrpE, found in Streptococcus pneumoniae serotype 4 (strain ATCC BAA-334 / TIGR4).